The sequence spans 375 residues: Odorant receptor 10 (375 aa).

6 helical membrane passes run 32–52 (ISIIPVTVMTFFMFLDLGHSW), 58–78 (VIIKGYFAVLYFNAVLRTLIL), 125–145 (NLALGAIISTCFTVYPMFTGV), 167–187 (IIYLVQVVLTFPGCCMYIPFT), 250–270 (YICFVEFLSFGLMLCALLFLL), and 279–299 (IVIVAAYIFMIISQIFAFYWH).

This sequence belongs to the insect chemoreceptor superfamily. Heteromeric odorant receptor channel (TC 1.A.69) family. Expressed in female antenna, maxillary palp and proboscis. Expressed in female body. Expressed in male tissues.

It localises to the cell membrane. Odorant receptor which complexes with Orco, a coreceptor, to form odorant-sensing units, providing sensitive and prolonged odorant signaling and calcium permeability. Can sense indole, 1-octen-3-ol, 3-methyindole and an insect repellent DEET. The protein is Odorant receptor 10 of Aedes albopictus (Asian tiger mosquito).